The primary structure comprises 158 residues: MTSPNILLTRIDNRLVHGQVGVTWTSTIGANLLVVVDDVVANDDIQQKLMGITAETYGFGIRFFTIEKTINVIGKAAPHQKIFLICRTPQTVRKLVEGGIDLKDVNVGNMHFSEGKKQISSKVYVDDQDLTDLRFIKQRGVNVFIQDVPGDQKEQIPD.

The 158-residue stretch at 1–158 folds into the PTS EIIB type-4 domain; it reads MTSPNILLTR…PGDQKEQIPD (158 aa). His-17 (pros-phosphohistidine intermediate) is an active-site residue.

Its subcellular location is the cytoplasm. In terms of biological role, the phosphoenolpyruvate-dependent sugar phosphotransferase system (sugar PTS), a major carbohydrate active -transport system, catalyzes the phosphorylation of incoming sugar substrates concomitantly with their translocation across the cell membrane. This system is involved in N-acetylgalactosamine transport. The polypeptide is N-acetylgalactosamine-specific phosphotransferase enzyme IIB component 1 (agaB) (Escherichia coli (strain K12)).